We begin with the raw amino-acid sequence, 139 residues long: NADPH-dependent 7-cyano-7-deazaguanine reductase (139 aa).

Cys-34 (thioimide intermediate) is an active-site residue. The active-site Proton donor is the Asp-41. Residues 56 to 58 (IEL) and 75 to 76 (HE) each bind substrate.

Belongs to the GTP cyclohydrolase I family. QueF type 1 subfamily.

Its subcellular location is the cytoplasm. The catalysed reaction is 7-aminomethyl-7-carbaguanine + 2 NADP(+) = 7-cyano-7-deazaguanine + 2 NADPH + 3 H(+). It participates in tRNA modification; tRNA-queuosine biosynthesis. Its function is as follows. Catalyzes the NADPH-dependent reduction of 7-cyano-7-deazaguanine (preQ0) to 7-aminomethyl-7-deazaguanine (preQ1). In Nitrosomonas eutropha (strain DSM 101675 / C91 / Nm57), this protein is NADPH-dependent 7-cyano-7-deazaguanine reductase.